The sequence spans 587 residues: ASI1-immunoprecipitated protein 3 (587 aa).

Positions 1 to 118 are disordered; the sequence is MVLSRRFAQV…NVTGKGKGKR (118 aa). Residues 66–98 show a composition bias toward acidic residues; it reads EDEDMAEGDDDQAEEETNPEAEEEEDEEEEEKP. Positions 129-248 constitute a BAH domain; sequence NTYDLEVPVL…TVEKKLWKLT (120 aa). The region spanning 344-493 is the TFIIS central domain; it reads HRDKCLGKLL…RMQMTSVRCS (150 aa). 2 disordered regions span residues 371–396 and 539–587; these read EAKVGSDASHLEQDEKDTKPENGKDE and TDKP…KKPE. The segment covering 560-570 has biased composition (basic and acidic residues); that stretch reads ETNKPKDEALK. The span at 571 to 581 shows a compositional bias: polar residues; sequence TNDSNADNNPE.

In terms of assembly, interacts with MOM1. Component of the ASI1-AIPP1-EDM2 (AAE) RNA regulatory complex composed of at least AIPP1/EDM3, ASI1 and EDM2 and may contain CPL2, AIPP2 and AIPP3/BDT1. Part of the BAH-PHD bivalent histone reader complex that contains AIPP2, PAIPP2 and AIPP3/BDT1; the BAH-PHD module associates with CPL2 to form the BAH-PHD-CPL2 complex (BPC) for transcriptional repression. Binds directly to CPL2, PHD1, PAIPP2/PHD2, AIPP2/PHD3, PHD4, PHD5 and PHD6. Expressed ubiquitously.

It localises to the nucleus. Its function is as follows. Transcriptional repressor. Together with PHD finger-containing proteins (e.g. PHD1, PAIPP2/PHD2, AIPP2/PHD3, PHD4, PHD5 and PHD6), cooperates to form a BAH-PHD bivalent histone reader complex able to read histone H3 lysine 27 trimethylation (H3K27me3) and low-methylated H3K4 histone marks in order to regulate transcription, especially to prevent early flowering; H3K27me3 reader of this complex. CPL2 is subsequently recruited to form a BAH-PHD-CPL2 complex (BPC) in order to silence several H3K27me3 and low-methylated H3K4 enriched loci, including AGO5, via the phosphorylation state-dependent inhibition of Pol II release from the transcriptional start site (e.g. Ser5P-Pol II dephosphorylation). The BPC complex represses flowering by inhibiting the expression of several genes, including AGL6, FT, FUL and SOC1. Prevents the accumulation of intronic heterochromatin-containing genes (e.g. IBM1, At3g05410 and RPP7). Seems to not be involved in vernalization establishment, by contrast to orthologs in grass plants. This Arabidopsis thaliana (Mouse-ear cress) protein is ASI1-immunoprecipitated protein 3.